Consider the following 369-residue polypeptide: 3-dehydroquinate synthase (369 aa).

NAD(+) is bound by residues 80-85, 114-118, 138-139, lysine 151, lysine 160, and 178-181; these read DGEQYK, GVIGD, TT, and TLKT. Zn(2+) contacts are provided by glutamate 193, histidine 256, and histidine 273.

This sequence belongs to the sugar phosphate cyclases superfamily. Dehydroquinate synthase family. Requires Co(2+) as cofactor. Zn(2+) is required as a cofactor. It depends on NAD(+) as a cofactor.

The protein resides in the cytoplasm. The enzyme catalyses 7-phospho-2-dehydro-3-deoxy-D-arabino-heptonate = 3-dehydroquinate + phosphate. Its pathway is metabolic intermediate biosynthesis; chorismate biosynthesis; chorismate from D-erythrose 4-phosphate and phosphoenolpyruvate: step 2/7. Its function is as follows. Catalyzes the conversion of 3-deoxy-D-arabino-heptulosonate 7-phosphate (DAHP) to dehydroquinate (DHQ). This chain is 3-dehydroquinate synthase, found in Psychrobacter cryohalolentis (strain ATCC BAA-1226 / DSM 17306 / VKM B-2378 / K5).